Reading from the N-terminus, the 89-residue chain is Small ribosomal subunit protein uS15 (89 aa).

The protein belongs to the universal ribosomal protein uS15 family. Part of the 30S ribosomal subunit. Forms a bridge to the 50S subunit in the 70S ribosome, contacting the 23S rRNA.

One of the primary rRNA binding proteins, it binds directly to 16S rRNA where it helps nucleate assembly of the platform of the 30S subunit by binding and bridging several RNA helices of the 16S rRNA. In terms of biological role, forms an intersubunit bridge (bridge B4) with the 23S rRNA of the 50S subunit in the ribosome. The chain is Small ribosomal subunit protein uS15 from Paraburkholderia phymatum (strain DSM 17167 / CIP 108236 / LMG 21445 / STM815) (Burkholderia phymatum).